Here is a 472-residue protein sequence, read N- to C-terminus: MSKKSIGKIVRIIGPVVDVKFSEGELPDIYDALVVNNPQTGKKLILEVEQLIGDNTVRTVAMDSTDGLIRGMEVENTGEPIKAPVGRGILGRMINVIGEPIDENGELKDVEYWPIHRPAPSMAEQKTEIEILETGLKVIDLLAPFPKGGKIGFFGGAGVGKTVLVMEMIRNIAIEHKGFSMFAGVGERTREGNDLYLEMQEAGVLNNTVLVFGQMNEPPGARFRVALTALTVAEYFRDVEGRDVLLFIDNIFRFVQAGSEVSALLGRMPSAVGYQPTLATDMGELQERITSTKRGSITSVQAIYVPADDITDPAPATTFTHLDATIVLSRQLAALGLYPAVDPLDSTSKILDPNIVGKEHYEVARGVQEVLQRYKDLQDIIAILGMEELSEEDKLIVQRARKIQRFLTQPTHVAERFTGMPGVYVPIKETIRGFKEILEGRYDDLPEAAFYMVGTIDEAVEKAKKLTQAVVI.

155 to 162 (GGAGVGKT) is an ATP binding site.

The protein belongs to the ATPase alpha/beta chains family. In terms of assembly, F-type ATPases have 2 components, CF(1) - the catalytic core - and CF(0) - the membrane proton channel. CF(1) has five subunits: alpha(3), beta(3), gamma(1), delta(1), epsilon(1). CF(0) has three main subunits: a(1), b(2) and c(9-12). The alpha and beta chains form an alternating ring which encloses part of the gamma chain. CF(1) is attached to CF(0) by a central stalk formed by the gamma and epsilon chains, while a peripheral stalk is formed by the delta and b chains.

It localises to the cell inner membrane. It carries out the reaction ATP + H2O + 4 H(+)(in) = ADP + phosphate + 5 H(+)(out). Functionally, produces ATP from ADP in the presence of a proton gradient across the membrane. The catalytic sites are hosted primarily by the beta subunits. The protein is ATP synthase subunit beta of Fervidobacterium nodosum (strain ATCC 35602 / DSM 5306 / Rt17-B1).